Here is a 491-residue protein sequence, read N- to C-terminus: Cytochrome P450 2B2 (491 aa).

The residue at position 128 (S128) is a Phosphoserine; by PKA. A heme-binding site is contributed by C436.

The protein belongs to the cytochrome P450 family. It depends on heme as a cofactor. Phosphorylation is accompanied by a decrease in enzyme activity.

It is found in the endoplasmic reticulum membrane. The protein localises to the microsome membrane. The catalysed reaction is an organic molecule + reduced [NADPH--hemoprotein reductase] + O2 = an alcohol + oxidized [NADPH--hemoprotein reductase] + H2O + H(+). Functionally, cytochromes P450 are a group of heme-thiolate monooxygenases. In liver microsomes, this enzyme is involved in an NADPH-dependent electron transport pathway. It oxidizes a variety of structurally unrelated compounds, including steroids, fatty acids, and xenobiotics. This chain is Cytochrome P450 2B2 (Cyp2b2), found in Rattus norvegicus (Rat).